Reading from the N-terminus, the 244-residue chain is Large ribosomal subunit protein uL30 (244 aa).

The disordered stretch occupies residues Met-1–Ala-37.

The protein belongs to the universal ribosomal protein uL30 family.

Binds to G-rich structures in 28S rRNA and in mRNAs. Plays a regulatory role in the translation apparatus; inhibits cell-free translation of mRNAs. This Caenorhabditis elegans protein is Large ribosomal subunit protein uL30 (rpl-7).